The following is a 348-amino-acid chain: Protein RecA (348 aa).

65 to 72 is a binding site for ATP; it reads GPESSGKT. A compositionally biased stretch (basic and acidic residues) spans 326 to 336; that stretch reads LLTPAEEKPET. The tract at residues 326–348 is disordered; the sequence is LLTPAEEKPETDAAPEIEENEEF. Residues 338 to 348 show a composition bias toward acidic residues; the sequence is AAPEIEENEEF.

Belongs to the RecA family.

It is found in the cytoplasm. Its function is as follows. Can catalyze the hydrolysis of ATP in the presence of single-stranded DNA, the ATP-dependent uptake of single-stranded DNA by duplex DNA, and the ATP-dependent hybridization of homologous single-stranded DNAs. It interacts with LexA causing its activation and leading to its autocatalytic cleavage. The polypeptide is Protein RecA (Aliivibrio fischeri (strain ATCC 700601 / ES114) (Vibrio fischeri)).